The primary structure comprises 164 residues: C-phycoerythrin class 1 subunit alpha (164 aa).

Residues Cys-82 and Cys-139 each contribute to the (2R,3E)-phycoerythrobilin site.

The protein belongs to the phycobiliprotein family. Heterodimer of an alpha and a beta chain. Post-translationally, contains two covalently linked phycoerythrobilin chromophores.

It localises to the cellular thylakoid membrane. Functionally, light-harvesting photosynthetic bile pigment-protein from the phycobiliprotein complex. The sequence is that of C-phycoerythrin class 1 subunit alpha (cpeA) from Synechococcus sp. (strain WH8020).